A 303-amino-acid chain; its full sequence is ATP phosphoribosyltransferase (303 aa).

Belongs to the ATP phosphoribosyltransferase family. Long subfamily. Mg(2+) is required as a cofactor.

The protein localises to the cytoplasm. The enzyme catalyses 1-(5-phospho-beta-D-ribosyl)-ATP + diphosphate = 5-phospho-alpha-D-ribose 1-diphosphate + ATP. Its pathway is amino-acid biosynthesis; L-histidine biosynthesis; L-histidine from 5-phospho-alpha-D-ribose 1-diphosphate: step 1/9. Feedback inhibited by histidine. Its function is as follows. Catalyzes the condensation of ATP and 5-phosphoribose 1-diphosphate to form N'-(5'-phosphoribosyl)-ATP (PR-ATP). Has a crucial role in the pathway because the rate of histidine biosynthesis seems to be controlled primarily by regulation of HisG enzymatic activity. The sequence is that of ATP phosphoribosyltransferase from Stenotrophomonas maltophilia (strain R551-3).